Consider the following 148-residue polypeptide: Snaclec 6 (148 aa).

The N-terminal stretch at M1–A23 is a signal peptide. Cystine bridges form between C27-C38, C55-C144, and C121-C136. One can recognise a C-type lectin domain in the interval Y34–K145. The N-linked (GlcNAc...) asparagine glycan is linked to N130.

It belongs to the snaclec family. As to quaternary structure, heterodimer; disulfide-linked. Expressed by the venom gland.

It localises to the secreted. Interferes with one step of hemostasis (modulation of platelet aggregation, or coagulation cascade, for example). The sequence is that of Snaclec 6 from Bitis arietans (African puff adder).